Here is a 172-residue protein sequence, read N- to C-terminus: Ribosome maturation factor RimM (172 aa).

Residues 96-168 (DGEFYYHEII…RVDVEILEGL (73 aa)) enclose the PRC barrel domain.

This sequence belongs to the RimM family. In terms of assembly, binds ribosomal protein uS19.

The protein resides in the cytoplasm. Functionally, an accessory protein needed during the final step in the assembly of 30S ribosomal subunit, possibly for assembly of the head region. Essential for efficient processing of 16S rRNA. May be needed both before and after RbfA during the maturation of 16S rRNA. It has affinity for free ribosomal 30S subunits but not for 70S ribosomes. This chain is Ribosome maturation factor RimM, found in Streptococcus pneumoniae serotype 4 (strain ATCC BAA-334 / TIGR4).